A 583-amino-acid chain; its full sequence is MPQIGLVSAVNLRVQGSSAYLWSSRSSSLGTESRDGCLQRNSLCFAGSESMGHKLKIRTPHATTRRLVKDLGPLKVVCIDYPRPELDNTVNYLEAAFLSSTFRASPRPTKPLEIVIAGAGLGGLSTAKYLADAGHKPILLEARDVLGGKVAAWKDDDGDWYETGLHIFFGAYPNIQNLFGELGINDRLQWKEHSMIFAMPSKPGEFSRFDFSEALPAPLNGILAILKNNEMLTWPEKVKFAIGLLPAMLGGQSYVEAQDGISVKDWMRKQGVPDRVTDEVFIAMSKALNFINPDELSMQCILIALNRFLQEKHGSKMAFLDGNPPERLCMPIVEHIESKGGQVRLNSRIKKIELNEDGSVKSFILSDGSAIEGDAFVFAAPVDIFKLLLPEDWKEIPYFQKLEKLVGVPVINVHIWFDRKLKNTYDHLLFSRSSLLSVYADMSVTCKEYYNPNQSMLELVFAPAEEWISRSDSEIIDATMKELATLFPDEISADQSKAKILKYHVVKTPRSVYKTVPGCEPCRPLQRSPIEGFYLAGDYTKQKYLASMEGAVLSGKLCAQAIVQDYELLVGRSQKKLSEASVV.

The transit peptide at 1–111 (MPQIGLVSAV…FRASPRPTKP (111 aa)) directs the protein to the chloroplast and chromoplast. FAD contacts are provided by residues 118–134 (GAGL…ADAG), 141–142 (EA), K149, 166–167 (HI), and Y172. R307 provides a ligand contact to substrate. FAD is bound by residues I349 and D538. Position 546 (A546) interacts with substrate. FAD is bound at residue M548.

This sequence belongs to the carotenoid/retinoid oxidoreductase family. Homotetramer. FAD is required as a cofactor.

Its subcellular location is the plastid. The protein resides in the chloroplast. It is found in the chromoplast. It localises to the membrane. It carries out the reaction 2 a plastoquinone + 15-cis-phytoene = 9,9',15-tri-cis-zeta-carotene + 2 a plastoquinol. It participates in carotenoid biosynthesis; lycopene biosynthesis. Functionally, converts phytoene into zeta-carotene via the intermediary of phytofluene by the symmetrical introduction of two double bonds at the C-11 and C-11' positions of phytoene with a concomitant isomerization of two neighboring double bonds at the C9 and C9' positions from trans to cis. This Solanum lycopersicum (Tomato) protein is 15-cis-phytoene desaturase, chloroplastic/chromoplastic (PDS).